The sequence spans 117 residues: Minor capsid protein p17 (117 aa).

N12 carries N-linked (GlcNAc...) asparagine; by host glycosylation. Residues A39–Y59 form a helical membrane-spanning segment. The interval K96–S117 is disordered. N-linked (GlcNAc...) asparagine; by host glycosylation occurs at N97.

This sequence belongs to the asfivirus minor capsid protein p17 family. In terms of assembly, interacts with the minor capsid protein M1249L and with the hexon capsid protein p72 capsomers; these interactions form a rigid zipper structure that stabilizes the capsomers. Interacts with host STING1.

Its subcellular location is the virion membrane. It is found in the host endoplasmic reticulum membrane. In terms of biological role, together with the penton and the other minor capsid proteins (M1249L, p49), forms a complicated network immediately below the outer capsid shell, stabilizing the whole capsid. Three copies of p17 encircle each p72 capsomer in the inner capsid shell, anchoring p72 capsomers on the inner membrane. Required for the assembly of the capsid and icosahedral morphogenesis. Additionally, inhibits the host cGAS-STING pathway through its interaction with STING1 and subsequent interference of the recruitment of downstream components TBK1 and IKBKE. This African swine fever virus (isolate Tick/South Africa/Pretoriuskop Pr4/1996) (ASFV) protein is Minor capsid protein p17.